Here is a 110-residue protein sequence, read N- to C-terminus: ATP-dependent Clp protease adapter protein ClpS (110 aa).

The protein belongs to the ClpS family. Binds to the N-terminal domain of the chaperone ClpA.

Functionally, involved in the modulation of the specificity of the ClpAP-mediated ATP-dependent protein degradation. This chain is ATP-dependent Clp protease adapter protein ClpS, found in Bartonella henselae (strain ATCC 49882 / DSM 28221 / CCUG 30454 / Houston 1) (Rochalimaea henselae).